The following is a 545-amino-acid chain: Chaperonin GroEL (545 aa).

ATP contacts are provided by residues 30-33 (TLGP), K51, 87-91 (DGTTT), G413, 477-479 (NAA), and D493.

The protein belongs to the chaperonin (HSP60) family. In terms of assembly, forms a cylinder of 14 subunits composed of two heptameric rings stacked back-to-back. Interacts with the co-chaperonin GroES.

It localises to the cytoplasm. It carries out the reaction ATP + H2O + a folded polypeptide = ADP + phosphate + an unfolded polypeptide.. In terms of biological role, together with its co-chaperonin GroES, plays an essential role in assisting protein folding. The GroEL-GroES system forms a nano-cage that allows encapsulation of the non-native substrate proteins and provides a physical environment optimized to promote and accelerate protein folding. The sequence is that of Chaperonin GroEL from Pseudomonas putida (Arthrobacter siderocapsulatus).